The chain runs to 322 residues: Ribose-phosphate pyrophosphokinase 1 (322 aa).

ATP-binding positions include 39–41 (DGE) and 98–99 (RQ). Positions 132 and 173 each coordinate Mg(2+). The active site involves lysine 196. Residues arginine 198, aspartate 224, and 228–232 (DTAGT) each bind D-ribose 5-phosphate.

The protein belongs to the ribose-phosphate pyrophosphokinase family. Class I subfamily. In terms of assembly, homohexamer. It depends on Mg(2+) as a cofactor.

The protein localises to the cytoplasm. The catalysed reaction is D-ribose 5-phosphate + ATP = 5-phospho-alpha-D-ribose 1-diphosphate + AMP + H(+). It functions in the pathway metabolic intermediate biosynthesis; 5-phospho-alpha-D-ribose 1-diphosphate biosynthesis; 5-phospho-alpha-D-ribose 1-diphosphate from D-ribose 5-phosphate (route I): step 1/1. Functionally, involved in the biosynthesis of the central metabolite phospho-alpha-D-ribosyl-1-pyrophosphate (PRPP) via the transfer of pyrophosphoryl group from ATP to 1-hydroxyl of ribose-5-phosphate (Rib-5-P). The protein is Ribose-phosphate pyrophosphokinase 1 of Streptococcus mutans serotype c (strain ATCC 700610 / UA159).